The sequence spans 150 residues: Large ribosomal subunit protein bL9 (150 aa).

This sequence belongs to the bacterial ribosomal protein bL9 family.

In terms of biological role, binds to the 23S rRNA. The chain is Large ribosomal subunit protein bL9 from Alcanivorax borkumensis (strain ATCC 700651 / DSM 11573 / NCIMB 13689 / SK2).